Here is a 229-residue protein sequence, read N- to C-terminus: Complex I assembly factor TMEM126B, mitochondrial (229 aa).

4 helical membrane passes run 71 to 91, 109 to 129, 140 to 160, and 198 to 218; these read IRGTLFFGVSSSLSGVMANLV, LTTLPFVATAVTYKLFVTDAL, VLRSSLIGVACGVSYPSALAF, and VPLLFQIIFGVFNGLYHYAVC.

As to quaternary structure, part of the mitochondrial complex I assembly/MCIA complex that comprises at least the core subunits TMEM126B, NDUFAF1, ECSIT and ACAD9 and complement subunits such as COA1 and TMEM186. Associates with the intermediate 370 kDa subcomplex of incompletely assembled complex I. Interacts with TMEM70.

The protein resides in the mitochondrion membrane. Functionally, as part of the MCIA complex, involved in the assembly of the mitochondrial complex I. Participates in constructing the membrane arm of complex I. The sequence is that of Complex I assembly factor TMEM126B, mitochondrial from Rattus norvegicus (Rat).